The chain runs to 156 residues: Probable succinate transporter subunit YjjB (156 aa).

Helical transmembrane passes span 7–27 (WALL…AMVF), 54–74 (FGMN…IIGI), 86–106 (VFTV…TAMI), and 128–148 (FLKA…PGIW).

It belongs to the ThrE exporter (TC 2.A.79) family. As to quaternary structure, the transporter is composed of YjjB and YjjP.

It is found in the cell inner membrane. In terms of biological role, involved in succinate export with YjjP. Both proteins are required for export. In Pectobacterium carotovorum subsp. carotovorum (strain PC1), this protein is Probable succinate transporter subunit YjjB.